A 1128-amino-acid chain; its full sequence is Transient receptor potential-gamma protein (1128 aa).

Topologically, residues 1-325 (MMEEENTIRP…MALQAVDIIR (325 aa)) are cytoplasmic. 2 ANK repeats span residues 57-86 (LGRT…DTKD) and 131-160 (PDIT…VLPM). A helical membrane pass occupies residues 326 to 346 (IGIMFPIFSLAYILAPYSSIG). Residues 347 to 403 (QTMRKPFIKFICHSASYFTFLFLLMLASQRIETFIGGWFFADSSGMLNTMEELPTKR) lie on the Extracellular side of the membrane. Residues 404–424 (GAKPTFIEWLILAWVSGLIWS) traverse the membrane as a helical segment. Residues 425–444 (EVKQLWDVGLQEYLNDMWNV) lie on the Cytoplasmic side of the membrane. The helical transmembrane segment at 445-465 (IDFVTNSLYVATVALRVVSFF) threads the bilayer. Residues 466-492 (QVQKEMIYNSHATDLPRERWDAWDPML) are Extracellular-facing. The chain crosses the membrane as a helical span at residues 493–513 (ISEGLFSAANIFSSLKLVYIF). The Cytoplasmic portion of the chain corresponds to 514–535 (SVNPHLGPLQVSLSRMVMDIMK). Residues 536–556 (FFFLYVLVLFAFGSGLNQLLW) form a helical membrane-spanning segment. Over 557-629 (YYADLEKKRC…GIKIFTRFWG (73 aa)) the chain is Extracellular. A helical transmembrane segment spans residues 630–650 (MLMFGTYSVINIVVLLNLLIA). The Cytoplasmic segment spans residues 651-1128 (MMNHSYQLIS…SCVSTTGAIG (478 aa)). Disordered regions lie at residues 865-898 (RQQS…TASS) and 1064-1111 (AAEA…SVNS). The segment covering 878-893 (ESPTTPTAPQGTQGAA) has biased composition (low complexity). The span at 1085–1111 (TQSQHDSVETNSTFTLSIDPSNTSVNS) shows a compositional bias: polar residues.

It belongs to the transient receptor (TC 1.A.4) family. STrpC subfamily. As to quaternary structure, interacts preferentially with trpl and interacts to a lower extent with trp. Expressed predominantly in the rhabdomeres of photoreceptor cells.

Its subcellular location is the cell projection. The protein resides in the rhabdomere membrane. A light-sensitive calcium channel that is required for inositide-mediated Ca(2+) entry in the retina during phospholipase C (PLC)-mediated phototransduction. Forms a regulated cation channel when heteromultimerized with trpl. In Drosophila melanogaster (Fruit fly), this protein is Transient receptor potential-gamma protein (Trpgamma).